A 453-amino-acid polypeptide reads, in one-letter code: Bifunctional protein GlmU (453 aa).

The pyrophosphorylase stretch occupies residues 1–226; that stretch reads MKFSTVILAA…SIEVEGVNDR (226 aa). UDP-N-acetyl-alpha-D-glucosamine contacts are provided by residues 8–11, Lys22, Gln73, 78–79, 100–102, Gly137, Glu151, Asn166, and Asn224; these read LAAG, GT, and YGD. A Mg(2+)-binding site is contributed by Asp102. A Mg(2+)-binding site is contributed by Asn224. Residues 227–247 are linker; sequence IQLARLERAFQARQAKKLLEQ. The segment at 248–453 is N-acetyltransferase; it reads GVMLRDPARF…AGWQRPAKKK (206 aa). The UDP-N-acetyl-alpha-D-glucosamine site is built by Arg330 and Lys348. His360 acts as the Proton acceptor in catalysis. UDP-N-acetyl-alpha-D-glucosamine-binding residues include Tyr363 and Asn374. Acetyl-CoA contacts are provided by residues Ala377, 383–384, Ser402, Ala420, and Arg437; that span reads NY.

This sequence in the N-terminal section; belongs to the N-acetylglucosamine-1-phosphate uridyltransferase family. The protein in the C-terminal section; belongs to the transferase hexapeptide repeat family. In terms of assembly, homotrimer. It depends on Mg(2+) as a cofactor.

The protein resides in the cytoplasm. The catalysed reaction is alpha-D-glucosamine 1-phosphate + acetyl-CoA = N-acetyl-alpha-D-glucosamine 1-phosphate + CoA + H(+). It catalyses the reaction N-acetyl-alpha-D-glucosamine 1-phosphate + UTP + H(+) = UDP-N-acetyl-alpha-D-glucosamine + diphosphate. It participates in nucleotide-sugar biosynthesis; UDP-N-acetyl-alpha-D-glucosamine biosynthesis; N-acetyl-alpha-D-glucosamine 1-phosphate from alpha-D-glucosamine 6-phosphate (route II): step 2/2. It functions in the pathway nucleotide-sugar biosynthesis; UDP-N-acetyl-alpha-D-glucosamine biosynthesis; UDP-N-acetyl-alpha-D-glucosamine from N-acetyl-alpha-D-glucosamine 1-phosphate: step 1/1. Its pathway is bacterial outer membrane biogenesis; LPS lipid A biosynthesis. Functionally, catalyzes the last two sequential reactions in the de novo biosynthetic pathway for UDP-N-acetylglucosamine (UDP-GlcNAc). The C-terminal domain catalyzes the transfer of acetyl group from acetyl coenzyme A to glucosamine-1-phosphate (GlcN-1-P) to produce N-acetylglucosamine-1-phosphate (GlcNAc-1-P), which is converted into UDP-GlcNAc by the transfer of uridine 5-monophosphate (from uridine 5-triphosphate), a reaction catalyzed by the N-terminal domain. This Vibrio cholerae serotype O1 (strain ATCC 39541 / Classical Ogawa 395 / O395) protein is Bifunctional protein GlmU.